Consider the following 251-residue polypeptide: Hydroxyacylglutathione hydrolase (251 aa).

Residues His53, His55, Asp57, His58, His110, Asp127, and His165 each contribute to the Zn(2+) site.

It belongs to the metallo-beta-lactamase superfamily. Glyoxalase II family. As to quaternary structure, monomer. Requires Zn(2+) as cofactor.

It catalyses the reaction an S-(2-hydroxyacyl)glutathione + H2O = a 2-hydroxy carboxylate + glutathione + H(+). The protein operates within secondary metabolite metabolism; methylglyoxal degradation; (R)-lactate from methylglyoxal: step 2/2. Its function is as follows. Thiolesterase that catalyzes the hydrolysis of S-D-lactoyl-glutathione to form glutathione and D-lactic acid. This Enterobacter sp. (strain 638) protein is Hydroxyacylglutathione hydrolase.